A 161-amino-acid chain; its full sequence is Regulator of ribonuclease activity A (161 aa).

It belongs to the RraA family. In terms of assembly, homotrimer. Binds to both RNA-binding sites in the C-terminal region of Rne and to RhlB.

It is found in the cytoplasm. Functionally, globally modulates RNA abundance by binding to RNase E (Rne) and regulating its endonucleolytic activity. Can modulate Rne action in a substrate-dependent manner by altering the composition of the degradosome. Modulates RNA-binding and helicase activities of the degradosome. This Tolumonas auensis (strain DSM 9187 / NBRC 110442 / TA 4) protein is Regulator of ribonuclease activity A.